Consider the following 360-residue polypeptide: Membrane-bound lytic murein transglycosylase C (360 aa).

The N-terminal stretch at 1-16 (MKKLLALAVIAPLLIS) is a signal peptide. A lipid anchor (N-palmitoyl cysteine) is attached at Cys17. Cys17 carries the S-diacylglycerol cysteine lipid modification.

It belongs to the transglycosylase Slt family.

Its subcellular location is the cell outer membrane. The enzyme catalyses Exolytic cleavage of the (1-&gt;4)-beta-glycosidic linkage between N-acetylmuramic acid (MurNAc) and N-acetylglucosamine (GlcNAc) residues in peptidoglycan, from either the reducing or the non-reducing ends of the peptidoglycan chains, with concomitant formation of a 1,6-anhydrobond in the MurNAc residue.. Murein-degrading enzyme. May play a role in recycling of muropeptides during cell elongation and/or cell division. The chain is Membrane-bound lytic murein transglycosylase C from Salmonella arizonae (strain ATCC BAA-731 / CDC346-86 / RSK2980).